A 504-amino-acid chain; its full sequence is Bifunctional purine biosynthesis protein PurH (504 aa).

In terms of domain architecture, MGS-like spans M1–S144.

Belongs to the PurH family.

The catalysed reaction is (6R)-10-formyltetrahydrofolate + 5-amino-1-(5-phospho-beta-D-ribosyl)imidazole-4-carboxamide = 5-formamido-1-(5-phospho-D-ribosyl)imidazole-4-carboxamide + (6S)-5,6,7,8-tetrahydrofolate. It catalyses the reaction IMP + H2O = 5-formamido-1-(5-phospho-D-ribosyl)imidazole-4-carboxamide. Its pathway is purine metabolism; IMP biosynthesis via de novo pathway; 5-formamido-1-(5-phospho-D-ribosyl)imidazole-4-carboxamide from 5-amino-1-(5-phospho-D-ribosyl)imidazole-4-carboxamide (10-formyl THF route): step 1/1. It participates in purine metabolism; IMP biosynthesis via de novo pathway; IMP from 5-formamido-1-(5-phospho-D-ribosyl)imidazole-4-carboxamide: step 1/1. The protein is Bifunctional purine biosynthesis protein PurH of Fusobacterium nucleatum subsp. nucleatum (strain ATCC 25586 / DSM 15643 / BCRC 10681 / CIP 101130 / JCM 8532 / KCTC 2640 / LMG 13131 / VPI 4355).